The chain runs to 607 residues: UvrABC system protein C (607 aa).

A GIY-YIG domain is found at 19–97 (TLSGVYQMRD…IKQYQPKFNI (79 aa)). Residues 205–240 (EHLLQTLTEHMLQASAAQQYERAAIVRDQISELRTI) form the UVR domain.

The protein belongs to the UvrC family. In terms of assembly, interacts with UvrB in an incision complex.

It localises to the cytoplasm. Functionally, the UvrABC repair system catalyzes the recognition and processing of DNA lesions. UvrC both incises the 5' and 3' sides of the lesion. The N-terminal half is responsible for the 3' incision and the C-terminal half is responsible for the 5' incision. In Dichelobacter nodosus (strain VCS1703A), this protein is UvrABC system protein C.